A 332-amino-acid chain; its full sequence is Aspartate carbamoyltransferase catalytic subunit (332 aa).

Residues arginine 54 and threonine 55 each coordinate carbamoyl phosphate. Lysine 82 provides a ligand contact to L-aspartate. Carbamoyl phosphate is bound by residues arginine 104, histidine 134, and glutamine 137. The L-aspartate site is built by arginine 175 and arginine 230. Positions 271 and 272 each coordinate carbamoyl phosphate. The interval 312-332 (GGPDGDSTTSPGSGPEGGTTP) is disordered.

This sequence belongs to the aspartate/ornithine carbamoyltransferase superfamily. ATCase family. Heterododecamer (2C3:3R2) of six catalytic PyrB chains organized as two trimers (C3), and six regulatory PyrI chains organized as three dimers (R2).

The enzyme catalyses carbamoyl phosphate + L-aspartate = N-carbamoyl-L-aspartate + phosphate + H(+). It functions in the pathway pyrimidine metabolism; UMP biosynthesis via de novo pathway; (S)-dihydroorotate from bicarbonate: step 2/3. In terms of biological role, catalyzes the condensation of carbamoyl phosphate and aspartate to form carbamoyl aspartate and inorganic phosphate, the committed step in the de novo pyrimidine nucleotide biosynthesis pathway. This chain is Aspartate carbamoyltransferase catalytic subunit, found in Beutenbergia cavernae (strain ATCC BAA-8 / DSM 12333 / CCUG 43141 / JCM 11478 / NBRC 16432 / NCIMB 13614 / HKI 0122).